The chain runs to 310 residues: Ribosomal protein uL3 glutamine methyltransferase (310 aa).

This sequence belongs to the protein N5-glutamine methyltransferase family. PrmB subfamily.

It carries out the reaction L-glutaminyl-[ribosomal protein uL3] + S-adenosyl-L-methionine = N(5)-methyl-L-glutaminyl-[ribosomal protein uL3] + S-adenosyl-L-homocysteine + H(+). In terms of biological role, specifically methylates large ribosomal subunit protein uL3 on 'Gln-150'. In Shigella dysenteriae serotype 1 (strain Sd197), this protein is Ribosomal protein uL3 glutamine methyltransferase.